We begin with the raw amino-acid sequence, 332 residues long: GTP cyclohydrolase-2 (332 aa).

Disordered regions lie at residues 1–20 (MASK…SETH) and 25–46 (PLLS…IPPE). Over residues 29-41 (PTLTPSHIPSQTP) the composition is skewed to polar residues. 171–175 (RIHSE) is a GTP binding site. Zn(2+)-binding residues include Cys176, Cys187, and Cys189. Residues Gln192, 214 to 216 (EGR), and Thr236 each bind GTP. Residue Asp248 is the Proton acceptor of the active site. Arg250 (nucleophile) is an active-site residue. Residues Thr271 and Lys276 each coordinate GTP.

It belongs to the GTP cyclohydrolase II family. Zn(2+) serves as cofactor.

The enzyme catalyses GTP + 4 H2O = 2,5-diamino-6-hydroxy-4-(5-phosphoribosylamino)-pyrimidine + formate + 2 phosphate + 3 H(+). It participates in cofactor biosynthesis; riboflavin biosynthesis; 5-amino-6-(D-ribitylamino)uracil from GTP: step 1/4. Catalyzes the conversion of GTP to 2,5-diamino-6-ribosylamino-4(3H)-pyrimidinone 5'-phosphate (DARP), formate and pyrophosphate. This Meyerozyma guilliermondii (strain ATCC 6260 / CBS 566 / DSM 6381 / JCM 1539 / NBRC 10279 / NRRL Y-324) (Yeast) protein is GTP cyclohydrolase-2 (RIB1).